A 246-amino-acid polypeptide reads, in one-letter code: MELNSVILTTGSSVGFFKLVNYGLGKLPIPETARRNAWKWNNISTSFVHSLITGVWSVLCFCMHPQMAEDLIETHSVFSHALVSVSIGYFIYDFLDMVINQKIIHSWELLFHHVVVITCFGISVLTCRYVGFAVVALLVEINSVFLHLRQVLRMANLAKSTFYRVNSMINLGTYVVFRINTLAWMTRWLVLNRDLIPLFSYTIGSVGLAIMTAMNIVLFYRLMRSDFMKASREKELRKEKEKEKDM.

The next 6 helical transmembrane spans lie at 5–25 (SVIL…YGLG), 43–63 (ISTS…CFCM), 79–99 (SHAL…DMVI), 107–127 (WELL…VLTC), 128–148 (RYVG…FLHL), and 199–219 (FSYT…IVLF). One can recognise a TLC domain in the interval 35–231 (RNAWKWNNIS…LMRSDFMKAS (197 aa)).

This sequence belongs to the TLCD family.

The protein resides in the cell membrane. Its function is as follows. Regulates the composition and fluidity of the plasma membrane. Inhibits the incorporation of membrane-fluidizing phospholipids containing omega-3 long-chain polyunsaturated fatty acids (LCPUFA) and thereby promotes membrane rigidity. Does not appear to have any effect on LCPUFA synthesis. The chain is TLC domain-containing protein 2 (tlcd2) from Danio rerio (Zebrafish).